A 173-amino-acid chain; its full sequence is Cytochrome c homolog (173 aa).

Residues 1 to 8 (MSGKELNK) lie on the Cytoplasmic side of the membrane. Residues 9-29 (IVAAILFASLIAMMVGFIANI) form a helical; Signal-anchor membrane-spanning segment. The Periplasmic portion of the chain corresponds to 30 to 173 (LYKPVLEPKH…LFLKTYVHDK (144 aa)). Positions 82, 85, 86, and 148 each coordinate heme c.

It belongs to the cytochrome c family. Binds 1 heme c group covalently per subunit.

The protein localises to the cell membrane. May be involved in electron transfer from bc1 complex to aa3. The chain is Cytochrome c homolog (cycM) from Rickettsia bellii (strain RML369-C).